The following is a 396-amino-acid chain: Subtilisin-like protease 5 (396 aa).

Positions 1-20 (MTGFLTILSLSLAALSVTNA) are cleaved as a signal peptide. A propeptide spanning residues 21 to 116 (AQILSVPQGA…VEPDAIIKQH (96 aa)) is cleaved from the precursor. The Inhibitor I9 domain maps to 37 to 114 (YIVVMKDDTS…AFVEPDAIIK (78 aa)). In terms of domain architecture, Peptidase S8 spans 125 to 396 (PWGLSRLSNR…SRLLYNGSGR (272 aa)). Catalysis depends on charge relay system residues aspartate 156 and histidine 187. 2 N-linked (GlcNAc...) asparagine glycosylation sites follow: asparagine 230 and asparagine 248. Catalysis depends on serine 342, which acts as the Charge relay system. The segment at 376–396 (PTIRNPGPDTTSRLLYNGSGR) is disordered. Asparagine 392 carries an N-linked (GlcNAc...) asparagine glycan.

Belongs to the peptidase S8 family.

It is found in the secreted. Functionally, secreted subtilisin-like serine protease with keratinolytic activity that contributes to pathogenicity. This is Subtilisin-like protease 5 (SUB5) from Arthroderma gypseum (strain ATCC MYA-4604 / CBS 118893) (Microsporum gypseum).